We begin with the raw amino-acid sequence, 194 residues long: Cell division protein SepF (194 aa).

Disordered regions lie at residues 35 to 54 and 159 to 194; these read DHRS…DSSP and SAPS…AGGL.

The protein belongs to the SepF family. As to quaternary structure, homodimer. Interacts with FtsZ.

It localises to the cytoplasm. Functionally, cell division protein that is part of the divisome complex and is recruited early to the Z-ring. Probably stimulates Z-ring formation, perhaps through the cross-linking of FtsZ protofilaments. Its function overlaps with FtsA. This is Cell division protein SepF from Prochlorococcus marinus (strain MIT 9313).